The chain runs to 589 residues: Sphingosine-1-phosphate lyase (589 aa).

Residues 1–58 (MSGVSNKTVSINGWYGMPIHLLREEGDFAQFMILTINELKIAIHGYLRNTPWYNMLKD) are Lumenal-facing. A glycan (N-linked (GlcNAc...) asparagine) is linked at N6. A helical membrane pass occupies residues 59–76 (YLFVIFCYKLISNFFYLL). At 77–589 (KVYGPVRLAV…LGPGEDTATK (513 aa)) the chain is on the cytoplasmic side. The residue at position 380 (K380) is an N6-(pyridoxal phosphate)lysine.

This sequence belongs to the group II decarboxylase family. Sphingosine-1-phosphate lyase subfamily. Homodimer. The cofactor is pyridoxal 5'-phosphate. Glycosylated.

Its subcellular location is the endoplasmic reticulum membrane. The enzyme catalyses sphinganine 1-phosphate = hexadecanal + phosphoethanolamine. It catalyses the reaction (4R)-hydroxysphinganine 1-phosphate = (2R)-hydroxyhexadecanal + phosphoethanolamine. It participates in lipid metabolism; sphingolipid metabolism. Sphingosine-1-phosphate lyase that cleaves phosphorylated sphingoid bases (PSBs), such as sphingosine-1-phosphate, into fatty aldehydes and phosphoethanolamine. Prefers C-16 dihydrosphingosine-l-phosphate (DHS-P) as a substrate. Regulates intracellular levels of sphingolipid long-chain base phosphates (LCBPs). Plays a role in the regulation of global responses to nutrient deprivation in yeast. This Saccharomyces cerevisiae (strain ATCC 204508 / S288c) (Baker's yeast) protein is Sphingosine-1-phosphate lyase.